Here is a 158-residue protein sequence, read N- to C-terminus: Peptide deformylase (158 aa).

2 residues coordinate Fe cation: cysteine 88 and histidine 130. The active site involves glutamate 131. Histidine 134 lines the Fe cation pocket.

It belongs to the polypeptide deformylase family. Requires Fe(2+) as cofactor.

The catalysed reaction is N-terminal N-formyl-L-methionyl-[peptide] + H2O = N-terminal L-methionyl-[peptide] + formate. In terms of biological role, removes the formyl group from the N-terminal Met of newly synthesized proteins. Requires at least a dipeptide for an efficient rate of reaction. N-terminal L-methionine is a prerequisite for activity but the enzyme has broad specificity at other positions. This Agathobacter rectalis (strain ATCC 33656 / DSM 3377 / JCM 17463 / KCTC 5835 / VPI 0990) (Eubacterium rectale) protein is Peptide deformylase.